Here is a 353-residue protein sequence, read N- to C-terminus: Protein pelota homolog (353 aa).

It belongs to the eukaryotic release factor 1 family. Pelota subfamily. As to quaternary structure, monomer. A divalent metal cation serves as cofactor.

It localises to the cytoplasm. Its function is as follows. May function in recognizing stalled ribosomes, interact with stem-loop structures in stalled mRNA molecules, and effect endonucleolytic cleavage of the mRNA. May play a role in the release non-functional ribosomes and degradation of damaged mRNAs. Has endoribonuclease activity. This is Protein pelota homolog from Methanobrevibacter smithii (strain ATCC 35061 / DSM 861 / OCM 144 / PS).